Consider the following 226-residue polypeptide: Probable chemoreceptor glutamine deamidase CheD (226 aa).

Residues 207 to 226 are disordered; that stretch reads PGGMRVERFDTPSRRDPVGA.

Belongs to the CheD family.

The enzyme catalyses L-glutaminyl-[protein] + H2O = L-glutamyl-[protein] + NH4(+). Its function is as follows. Probably deamidates glutamine residues to glutamate on methyl-accepting chemotaxis receptors (MCPs), playing an important role in chemotaxis. This Bordetella bronchiseptica (strain ATCC BAA-588 / NCTC 13252 / RB50) (Alcaligenes bronchisepticus) protein is Probable chemoreceptor glutamine deamidase CheD.